Reading from the N-terminus, the 118-residue chain is Large ribosomal subunit protein bL20 (118 aa).

Belongs to the bacterial ribosomal protein bL20 family.

In terms of biological role, binds directly to 23S ribosomal RNA and is necessary for the in vitro assembly process of the 50S ribosomal subunit. It is not involved in the protein synthesizing functions of that subunit. The chain is Large ribosomal subunit protein bL20 from Edwardsiella ictaluri (strain 93-146).